The sequence spans 73 residues: Defensin-like protein 10 (73 aa).

An N-terminal signal peptide occupies residues 1–28; that stretch reads MKLSLRLISALLMSVMLLFATGMGPVEA. Disulfide bonds link Cys31–Cys73, Cys42–Cys62, Cys48–Cys67, and Cys52–Cys69.

The protein belongs to the DEFL family.

The protein localises to the secreted. Its function is as follows. Confers broad-spectrum resistance to pathogens. This chain is Defensin-like protein 10 (PDF2.6), found in Arabidopsis thaliana (Mouse-ear cress).